A 75-amino-acid chain; its full sequence is uncharacterized protein (75 aa).

The dksA C4-type zinc finger occupies 43–67 (CSECGLPIPTTRLRANPFAHRCVSC).

This is an uncharacterized protein from Haemophilus influenzae (strain ATCC 51907 / DSM 11121 / KW20 / Rd).